The primary structure comprises 85 residues: UPF0291 protein SEQ_0545 (85 aa).

Residues 62–85 (TPEKLRQVQREKGLHGRSLDDPES) form a disordered region.

It belongs to the UPF0291 family.

Its subcellular location is the cytoplasm. The sequence is that of UPF0291 protein SEQ_0545 from Streptococcus equi subsp. equi (strain 4047).